The primary structure comprises 202 residues: ATP-dependent Clp protease proteolytic subunit (202 aa).

The Nucleophile role is filled by Ser106. Residue His131 is part of the active site.

The protein belongs to the peptidase S14 family. Fourteen ClpP subunits assemble into 2 heptameric rings which stack back to back to give a disk-like structure with a central cavity, resembling the structure of eukaryotic proteasomes.

It is found in the cytoplasm. The enzyme catalyses Hydrolysis of proteins to small peptides in the presence of ATP and magnesium. alpha-casein is the usual test substrate. In the absence of ATP, only oligopeptides shorter than five residues are hydrolyzed (such as succinyl-Leu-Tyr-|-NHMec, and Leu-Tyr-Leu-|-Tyr-Trp, in which cleavage of the -Tyr-|-Leu- and -Tyr-|-Trp bonds also occurs).. Cleaves peptides in various proteins in a process that requires ATP hydrolysis. Has a chymotrypsin-like activity. Plays a major role in the degradation of misfolded proteins. The protein is ATP-dependent Clp protease proteolytic subunit of Acidovorax sp. (strain JS42).